We begin with the raw amino-acid sequence, 164 residues long: Dehydrin Rab16C (164 aa).

The span at 42 to 51 (MGGHHAGAGG) shows a compositional bias: gly residues. The disordered stretch occupies residues 42-164 (MGGHHAGAGG…KIKEKLPGQH (123 aa)). Positions 105-115 (GNNQQQQQMMG) are enriched in low complexity. Residues 128-138 (GMTGAGTGTGV) are compositionally biased toward gly residues. The segment covering 147–164 (GEKKGFMDKIKEKLPGQH) has biased composition (basic and acidic residues).

It belongs to the plant dehydrin family.

This chain is Dehydrin Rab16C (RAB16C), found in Oryza sativa subsp. japonica (Rice).